Here is a 567-residue protein sequence, read N- to C-terminus: Proline--tRNA ligase (567 aa).

Belongs to the class-II aminoacyl-tRNA synthetase family. ProS type 1 subfamily. As to quaternary structure, homodimer.

Its subcellular location is the cytoplasm. It carries out the reaction tRNA(Pro) + L-proline + ATP = L-prolyl-tRNA(Pro) + AMP + diphosphate. Catalyzes the attachment of proline to tRNA(Pro) in a two-step reaction: proline is first activated by ATP to form Pro-AMP and then transferred to the acceptor end of tRNA(Pro). As ProRS can inadvertently accommodate and process non-cognate amino acids such as alanine and cysteine, to avoid such errors it has two additional distinct editing activities against alanine. One activity is designated as 'pretransfer' editing and involves the tRNA(Pro)-independent hydrolysis of activated Ala-AMP. The other activity is designated 'posttransfer' editing and involves deacylation of mischarged Ala-tRNA(Pro). The misacylated Cys-tRNA(Pro) is not edited by ProRS. This Campylobacter curvus (strain 525.92) protein is Proline--tRNA ligase.